The primary structure comprises 316 residues: tRNA uridine(34) hydroxylase (316 aa).

The Rhodanese domain maps to 136-230; it reads ADENTVVVDK…YLEEVPREQS (95 aa). Catalysis depends on Cys190, which acts as the Cysteine persulfide intermediate.

It belongs to the TrhO family.

It carries out the reaction uridine(34) in tRNA + AH2 + O2 = 5-hydroxyuridine(34) in tRNA + A + H2O. In terms of biological role, catalyzes oxygen-dependent 5-hydroxyuridine (ho5U) modification at position 34 in tRNAs. This Brucella abortus (strain 2308) protein is tRNA uridine(34) hydroxylase.